The chain runs to 326 residues: Mitochondrial substrate carrier family protein R (326 aa).

Solcar repeat units follow at residues 9–95 (TSPM…LKNN), 101–214 (KSSV…FKRI), and 226–318 (VIGI…LCDY). 6 consecutive transmembrane segments (helical) span residues 12–32 (MVTL…IAPL), 64–84 (LAGL…YSAI), 104–124 (VQIF…TYPL), 185–205 (GIWR…GVGY), 226–246 (VIGI…QTAA), and 290–310 (LFKG…VAFL).

Belongs to the mitochondrial carrier (TC 2.A.29) family.

Its subcellular location is the mitochondrion inner membrane. Functionally, mitochondrial solute carriers shuttle metabolites, nucleotides, and cofactors through the mitochondrial inner membrane. May be involved in the accumulation of coenzyme A in the mitochondrial matrix. This Dictyostelium discoideum (Social amoeba) protein is Mitochondrial substrate carrier family protein R (mcfR).